A 466-amino-acid chain; its full sequence is ATP synthase subunit beta (466 aa).

ATP is bound at residue 155 to 162 (GGAGVGKT).

Belongs to the ATPase alpha/beta chains family. F-type ATPases have 2 components, CF(1) - the catalytic core - and CF(0) - the membrane proton channel. CF(1) has five subunits: alpha(3), beta(3), gamma(1), delta(1), epsilon(1). CF(0) has three main subunits: a(1), b(2) and c(9-12). The alpha and beta chains form an alternating ring which encloses part of the gamma chain. CF(1) is attached to CF(0) by a central stalk formed by the gamma and epsilon chains, while a peripheral stalk is formed by the delta and b chains.

The protein resides in the cell inner membrane. The catalysed reaction is ATP + H2O + 4 H(+)(in) = ADP + phosphate + 5 H(+)(out). Produces ATP from ADP in the presence of a proton gradient across the membrane. The catalytic sites are hosted primarily by the beta subunits. This is ATP synthase subunit beta from Bordetella pertussis (strain Tohama I / ATCC BAA-589 / NCTC 13251).